The chain runs to 190 residues: Transmembrane protein 11, mitochondrial (190 aa).

Helical transmembrane passes span 84 to 100 (VLAG…LPLD) and 107 to 124 (LPAG…GISW).

The protein belongs to the TMEM11 family. In terms of assembly, associates with the mitochondrial contact site and cristae organizing system (MICOS) complex, composed of at least MICOS10/MIC10, CHCHD3/MIC19, CHCHD6/MIC25, APOOL/MIC27, IMMT/MIC60, APOO/MIC23/MIC26 and QIL1/MIC13. This complex was also known under the names MINOS or MitOS complex. The MICOS complex associates with mitochondrial outer membrane proteins SAMM50, MTX1, MTX2 and DNAJC11, mitochondrial inner membrane protein TMEM11 and with HSPA9. Interacts with IMMT/MIC60.

It localises to the mitochondrion inner membrane. In terms of biological role, plays a role in mitochondrial morphogenesis. The chain is Transmembrane protein 11, mitochondrial (Tmem11) from Mus musculus (Mouse).